We begin with the raw amino-acid sequence, 4981 residues long: Protocadherin Fat 4 (4981 aa).

The N-terminal stretch at 1–42 is a signal peptide; sequence MNLAANRAPGRRRLPLPSPSLCQLLRVWGLLSLLPGSARVQA. Over 43-4505 the chain is Extracellular; sequence AEQRQVFQVM…PDEISLPLWA (4463 aa). 34 consecutive Cadherin domains span residues 44–135, 136–250, 251–353, 359–475, 476–582, 584–689, 690–793, 794–893, 894–996, 997–1100, 1101–1210, 1211–1315, 1316–1420, 1421–1529, 1529–1629, 1630–1740, 1741–1841, 1842–1944, 1945–2051, 2051–2154, 2155–2259, 2260–2364, 2365–2468, 2469–2569, 2570–2671, 2672–2775, 2775–2874, 2875–2985, 2986–3091, 3092–3196, 3197–3300, 3301–3406, 3407–3512, and 3511–3622; these read EQRQ…APVF, PDPS…PPVF, GSSH…DPVV, PATS…PPVF, EQQV…KPVF, QPEG…SPVF, YPVQ…PPVF, SQAA…APHF, LQAV…PPVF, DQIS…RPLF, NSTN…APKF, LKDF…TPSF, PKST…PPSF, PPGD…VPMF, FISQ…GPVF, TQTK…PPVF, PTDT…TPRF, SRPV…PPVF, SMSS…PPMF, FLSP…NPVF, AQAM…VPVF, ELSP…VPTF, ANNM…PPRF, QHHP…FPKV, RAKE…APTF, EEDP…APRF, FSQI…TPRF, SRPS…PPQF, LQNK…TPEF, SQNH…SPVF, VPDE…VPRF, VSKL…PPVF, SLST…GPVL, and VLTV…VEIF. Residues N84 and N237 are each glycosylated (N-linked (GlcNAc...) asparagine). N-linked (GlcNAc...) asparagine glycans are attached at residues N393, N416, N435, N483, N551, N615, N676, N721, N825, N880, N948, N1085, N1101, N1104, N1225, N1296, N1389, and N1514. 4 N-linked (GlcNAc...) asparagine glycosylation sites follow: N1828, N1899, N1967, and N2119. Residues N2387 and N2432 are each glycosylated (N-linked (GlcNAc...) asparagine). N-linked (GlcNAc...) asparagine glycans are attached at residues N2923, N2939, N3038, N3142, N3219, N3394, and N3479. Residues N3708 and N3760 are each glycosylated (N-linked (GlcNAc...) asparagine). Residues 3804–3862 enclose the EGF-like 1 domain; sequence DHDPCIHGPCQNGGSCLRRLAVGSALKIQESLPVIIVANEPLQPSQCKCVPGYAGSWCE. 12 cysteine pairs are disulfide-bonded: C3808–C3819, C3813–C3850, C3852–C3861, C3868–C3879, C3873–C3888, C3890–C3899, C3906–C3917, C3911–C3926, C3928–C3937, C3944–C3955, C3949–C3964, and C3966–C3975. Positions 3864 to 3900 constitute an EGF-like 2; calcium-binding domain; sequence DIDECLPAPCHNGGTCHNLVGGFSCSCPEGFTGRACE. Residues 3902–3938 enclose the EGF-like 3; calcium-binding domain; sequence DINECLPSPCKHGAVCQNFPGGFNCVCKTGYTGKMCE. The EGF-like 4 domain maps to 3940–3976; the sequence is SVNYCECNPCFNGGSCQSGVESYYCHCPFGVFGKHCE. In terms of domain architecture, Laminin G-like 1 spans 3977-4161; it reads LNSYGFEELS…LAAQGILDQC (185 aa). Residue N4019 is glycosylated (N-linked (GlcNAc...) asparagine). Disulfide bonds link C4135/C4161, C4168/C4179, C4173/C4188, and C4190/C4199. The 37-residue stretch at 4164–4200 folds into the EGF-like 5 domain; the sequence is LEGTCARNPCQHGGTCVDFWSWQQCQCMEGLTGKYCE. The region spanning 4219–4399 is the Laminin G-like 2 domain; it reads YHMSQSEKRE…KTDPSVKIGC (181 aa). N-linked (GlcNAc...) asparagine glycosylation is found at N4269 and N4314. Disulfide bonds link C4366/C4399, C4431/C4442, C4436/C4452, and C4454/C4463. Residues 4427 to 4464 enclose the EGF-like 6 domain; sequence PPGDCASHPCQNGGSCEPGLLSGYTCSCPESHTGRTCE. A helical transmembrane segment spans residues 4506 to 4526; it reads VPAIVGSCATALALLVLSLIL. Residues 4527-4981 are Cytoplasmic-facing; sequence CNQCRGKMPK…AKDGEAEQYV (455 aa). Disordered regions lie at residues 4535–4585, 4677–4713, 4753–4773, 4796–4911, and 4957–4981; these read PKNP…PDII, PSSY…KPSA, RRSK…SRLK, RLNT…PAAA, and AAGN…EQYV. Positions 4677–4701 are enriched in polar residues; sequence PSSYGQGLRTSSLSHSACPTPNPLS. A necessary and sufficient for interaction with MPDZ region spans residues 4708-4797; that stretch reads FSKPSAFYRN…GLSIEEVERL (90 aa). Positions 4811 to 4823 are enriched in basic and acidic residues; the sequence is DHGRSSSEEDCRR. S4878 carries the phosphoserine modification. Positions 4971-4981 are enriched in basic and acidic residues; sequence AAKDGEAEQYV.

Heterophilic interaction with DCHS1; this interaction affects their respective protein levels. Interacts (via cytoplasmic domain) with MPDZ. Forms a complex with PALS1 and MPDZ. As to expression, widely expressed.

It localises to the membrane. Functionally, cadherins are cell-cell interaction molecules. FAT4 plays a role in the maintenance of planar cell polarity as well as in inhibition of YAP1-mediated neuroprogenitor cell proliferation and differentiation. This is Protocadherin Fat 4 (Fat4) from Mus musculus (Mouse).